A 463-amino-acid polypeptide reads, in one-letter code: 3-isopropylmalate dehydratase large subunit (463 aa).

[4Fe-4S] cluster contacts are provided by cysteine 347, cysteine 407, and cysteine 410.

Belongs to the aconitase/IPM isomerase family. LeuC type 1 subfamily. In terms of assembly, heterodimer of LeuC and LeuD. [4Fe-4S] cluster serves as cofactor.

The catalysed reaction is (2R,3S)-3-isopropylmalate = (2S)-2-isopropylmalate. The protein operates within amino-acid biosynthesis; L-leucine biosynthesis; L-leucine from 3-methyl-2-oxobutanoate: step 2/4. Functionally, catalyzes the isomerization between 2-isopropylmalate and 3-isopropylmalate, via the formation of 2-isopropylmaleate. The sequence is that of 3-isopropylmalate dehydratase large subunit from Buchnera aphidicola subsp. Cinara cedri (strain Cc).